A 156-amino-acid polypeptide reads, in one-letter code: Movement protein P17 (156 aa).

The interval 38–54 (AEDAEEEAIAAQEELEF) is homodimerization. Disordered regions lie at residues 55–80 (PEDE…EVSP) and 131–156 (AKYH…IKRG). The interval 57 to 156 (DEAQARHSCL…RAAPKLIKRG (100 aa)) is RNA-binding. 4 positions are modified to phosphoserine: Ser71, Ser79, Ser137, and Ser140. Residues 144–156 (KLRRAAPKLIKRG) are compositionally biased toward basic residues.

Belongs to the polerovirus movement protein family. In terms of assembly, homodimer. Heterodimer with movement protein P3a. Post-translationally, expressed as a nonphosphorylated 20kDa form and a phosphorylated 22kDa form. Phosphorylated by a host PKC-related kinase. Serine phosphorylation is required for plamodesma targeting.

It is found in the host cell junction. The protein resides in the host plasmodesma. Its subcellular location is the host mitochondrion outer membrane. The protein localises to the host Golgi apparatus. It localises to the host chloroplast envelope. In terms of biological role, together with movement protein P3a, facilitates long-distance movement of virions in host. Transports viral genome to neighboring plant cells directly through plasmosdesmata, without any budding. The movement protein allows efficient cell to cell propagation, by bypassing the host cell wall barrier. Binds ssRNA. This is Movement protein P17 from Solanum tuberosum (Potato).